Here is a 278-residue protein sequence, read N- to C-terminus: MRTQGIKPRIREILSKELPEELVKLLPKRWVRIGDVLLLPLRPELEPYKHRIAEVYAEVLGVKTVLRKGHIHGETRKPDYELLYGSDTVTVHVENGIKYKLDVAKIMFSPANVKERVRMAKVAKPDELVVDMFAGIGHLSLPIAVYGKAKVIAIEKDPYTFKFLVENIHLNKVEDRMSAYNMDNRDFPGENIADRILMGYVVRTHEFIPKALSIAKDGAIIHYHNTVPEKLMPREPFETFKRITKEYGYDVEKLNELKIKRYAPGVWHVVLDLRVFKS.

S-adenosyl-L-methionine-binding positions include Ser109, Arg116, Glu155, and 183 to 184 (DN).

This sequence belongs to the class I-like SAM-binding methyltransferase superfamily. TRM5/TYW2 family.

It is found in the cytoplasm. It catalyses the reaction 4-demethylwyosine(37) in tRNA(Phe) + S-adenosyl-L-methionine = 4-demethyl-7-[(3S)-3-amino-3-carboxypropyl]wyosine(37) in tRNA(Phe) + S-methyl-5'-thioadenosine + H(+). Functionally, S-adenosyl-L-methionine-dependent transferase that acts as a component of the wyosine derivatives biosynthesis pathway. Catalyzes the transfer of the alpha-amino-alpha-carboxypropyl (acp) group from S-adenosyl-L-methionine to 4-demethylwyosine (imG-14), forming 7-aminocarboxypropyl-demethylwyosine (wybutosine-86) at position 37 of tRNA(Phe). The chain is tRNA(Phe) (4-demethylwyosine(37)-C(7)) aminocarboxypropyltransferase from Pyrococcus horikoshii (strain ATCC 700860 / DSM 12428 / JCM 9974 / NBRC 100139 / OT-3).